Consider the following 348-residue polypeptide: tRNA pseudouridine synthase D (348 aa).

Asp-78 acts as the Nucleophile in catalysis. Residues 150-304 (GLPNFFGPQR…AEGTRRAARL (155 aa)) enclose the TRUD domain.

The protein belongs to the pseudouridine synthase TruD family.

The catalysed reaction is uridine(13) in tRNA = pseudouridine(13) in tRNA. Responsible for synthesis of pseudouridine from uracil-13 in transfer RNAs. This chain is tRNA pseudouridine synthase D, found in Anaeromyxobacter dehalogenans (strain 2CP-1 / ATCC BAA-258).